The primary structure comprises 370 residues: Alanine racemase (370 aa).

Lys36 serves as the catalytic Proton acceptor; specific for D-alanine. N6-(pyridoxal phosphate)lysine is present on Lys36. Residue Arg134 participates in substrate binding. The active-site Proton acceptor; specific for L-alanine is Tyr265. Position 313 (Met313) interacts with substrate.

The protein belongs to the alanine racemase family. The cofactor is pyridoxal 5'-phosphate.

The catalysed reaction is L-alanine = D-alanine. It functions in the pathway amino-acid biosynthesis; D-alanine biosynthesis; D-alanine from L-alanine: step 1/1. In terms of biological role, catalyzes the interconversion of L-alanine and D-alanine. May also act on other amino acids. The sequence is that of Alanine racemase (alr) from Desulforamulus reducens (strain ATCC BAA-1160 / DSM 100696 / MI-1) (Desulfotomaculum reducens).